The following is a 230-amino-acid chain: 7-cyano-7-deazaguanine synthase (230 aa).

An ATP-binding site is contributed by 8–18 (LSGGMDSAVVT). Positions 186, 196, 199, and 202 each coordinate Zn(2+).

It belongs to the QueC family. It depends on Zn(2+) as a cofactor.

It carries out the reaction 7-carboxy-7-deazaguanine + NH4(+) + ATP = 7-cyano-7-deazaguanine + ADP + phosphate + H2O + H(+). The protein operates within purine metabolism; 7-cyano-7-deazaguanine biosynthesis. In terms of biological role, catalyzes the ATP-dependent conversion of 7-carboxy-7-deazaguanine (CDG) to 7-cyano-7-deazaguanine (preQ(0)). The polypeptide is 7-cyano-7-deazaguanine synthase (Xylella fastidiosa (strain 9a5c)).